The chain runs to 211 residues: Thymidylate kinase (211 aa).

10 to 17 is an ATP binding site; sequence GGDGVGKS.

Belongs to the thymidylate kinase family.

The catalysed reaction is dTMP + ATP = dTDP + ADP. In terms of biological role, phosphorylation of dTMP to form dTDP in both de novo and salvage pathways of dTTP synthesis. This is Thymidylate kinase from Clavibacter sepedonicus (Clavibacter michiganensis subsp. sepedonicus).